Reading from the N-terminus, the 64-residue chain is Prokaryotic ubiquitin-like protein Pup (64 aa).

Positions 1 to 37 (MAQEQTKRGGGGGDDEDVTGTTAAGQERREKLAQDTD) are disordered. Positions 21–58 (TTAAGQERREKLAQDTDDLLDEIDDVLEENAEDFVRAY) are ARC ATPase binding. Residues 25 to 52 (GQERREKLAQDTDDLLDEIDDVLEENAE) adopt a coiled-coil conformation. Deamidated glutamine is present on Gln-64. An Isoglutamyl lysine isopeptide (Gln-Lys) (interchain with K-? in acceptor proteins) cross-link involves residue Gln-64.

It belongs to the prokaryotic ubiquitin-like protein family. As to quaternary structure, strongly interacts with the proteasome-associated ATPase ARC through a hydrophobic interface; the interacting region of Pup lies in its C-terminal half. There is one Pup binding site per ARC hexamer ring. In terms of processing, is modified by deamidation of its C-terminal glutamine to glutamate by the deamidase Dop, a prerequisite to the subsequent pupylation process.

It participates in protein degradation; proteasomal Pup-dependent pathway. Its function is as follows. Protein modifier that is covalently attached to lysine residues of substrate proteins, thereby targeting them for proteasomal degradation. The tagging system is termed pupylation. In Mycobacterium marinum (strain ATCC BAA-535 / M), this protein is Prokaryotic ubiquitin-like protein Pup.